Reading from the N-terminus, the 273-residue chain is 2,3,4,5-tetrahydropyridine-2,6-dicarboxylate N-succinyltransferase (273 aa).

Substrate is bound by residues Arg-104 and Asp-141.

It belongs to the transferase hexapeptide repeat family. As to quaternary structure, homotrimer.

It localises to the cytoplasm. The catalysed reaction is (S)-2,3,4,5-tetrahydrodipicolinate + succinyl-CoA + H2O = (S)-2-succinylamino-6-oxoheptanedioate + CoA. Its pathway is amino-acid biosynthesis; L-lysine biosynthesis via DAP pathway; LL-2,6-diaminopimelate from (S)-tetrahydrodipicolinate (succinylase route): step 1/3. The polypeptide is 2,3,4,5-tetrahydropyridine-2,6-dicarboxylate N-succinyltransferase (Laribacter hongkongensis (strain HLHK9)).